Reading from the N-terminus, the 458-residue chain is MKKLWGGRFQKTPEKWVDEFGASITFDQNLVKEDITGSLAHAAMLKKCGILTEEEEGAIRQGLQTLLQKAEEGTLEFSVDYEDIHLNIEKMLIEEIGPLGGKLHTGRSRNDQVATDMHLYLKDHVSHIIVLIEQFQKALIEKAEANVETILPGYTHLQRAQPISFAHHLLAYFWMLERDKERFRDAMKRINISPLGCGALAGTTFPIDRNYSAELLGFDSIYENSLDGVSDRDFILEFLSGSSMLMMHLSRLSEEIILWCSQEFRFIELDDTYATGSSMMPQKKNPDMAELIRGKTGRVYGDMMGLFTIMKGLPLAYNKDLQEDKEGMFDTVKTVEGSLQIFTGMIETMKVNKDIMKQATKQDFSNATELADYLAKKGMPFREAHEVVGKLVYSCIEKGIYLSDMAFEEFLQASSLFEEDIYTVLDPHHAVEKRMSAGGTGFQQVEQALVKAKACAGI.

Belongs to the lyase 1 family. Argininosuccinate lyase subfamily.

It is found in the cytoplasm. The enzyme catalyses 2-(N(omega)-L-arginino)succinate = fumarate + L-arginine. Its pathway is amino-acid biosynthesis; L-arginine biosynthesis; L-arginine from L-ornithine and carbamoyl phosphate: step 3/3. This is Argininosuccinate lyase from Bacillus velezensis (strain DSM 23117 / BGSC 10A6 / LMG 26770 / FZB42) (Bacillus amyloliquefaciens subsp. plantarum).